The chain runs to 621 residues: Chaperone protein DnaK (621 aa).

At Thr202 the chain carries Phosphothreonine; by autocatalysis. The interval 596-621 is disordered; that stretch reads SQFAQAAKQNEEKKEEDKKDSEESKN. Residues 604-621 are compositionally biased toward basic and acidic residues; that stretch reads QNEEKKEEDKKDSEESKN.

The protein belongs to the heat shock protein 70 family.

Acts as a chaperone. The chain is Chaperone protein DnaK from Malacoplasma penetrans (strain HF-2) (Mycoplasma penetrans).